The following is a 130-amino-acid chain: METNRQKKIGSVIQKDLVDILQGEVRKNGVSNLVISVSKVSVTSDLSVATVYLSIFPQEKAKETLEGIKSNTTLIKHDLSQRVRLQLRRVPNLVFFIDDSLDYIEKIDNALAGKENPIENRDLLDKRRKS.

It belongs to the RbfA family. In terms of assembly, monomer. Binds 30S ribosomal subunits, but not 50S ribosomal subunits or 70S ribosomes.

It localises to the cytoplasm. Functionally, one of several proteins that assist in the late maturation steps of the functional core of the 30S ribosomal subunit. Associates with free 30S ribosomal subunits (but not with 30S subunits that are part of 70S ribosomes or polysomes). Required for efficient processing of 16S rRNA. May interact with the 5'-terminal helix region of 16S rRNA. This chain is Ribosome-binding factor A, found in Flavobacterium johnsoniae (strain ATCC 17061 / DSM 2064 / JCM 8514 / BCRC 14874 / CCUG 350202 / NBRC 14942 / NCIMB 11054 / UW101) (Cytophaga johnsonae).